Consider the following 224-residue polypeptide: Thiamine-triphosphatase (224 aa).

The residue at position 2 (Ala-2) is an N-acetylalanine. The 197-residue stretch at 5–201 folds into the CYTH domain; that stretch reads LIEVERKFAP…AKLMVYLQRF (197 aa). Mg(2+)-binding residues include Glu-7 and Glu-9. Substrate contacts are provided by Lys-11, Arg-55, Arg-57, Lys-65, and Arg-125. The Mg(2+) site is built by Asp-145, Glu-157, and Glu-159. Glu-157 contacts substrate. Position 193 (Lys-193) interacts with substrate.

Belongs to the ThTPase family. Monomer. The cofactor is Mg(2+).

The protein resides in the cytoplasm. The enzyme catalyses thiamine triphosphate + H2O = thiamine diphosphate + phosphate + H(+). Its function is as follows. Hydrolase highly specific for thiamine triphosphate (ThTP). The chain is Thiamine-triphosphatase (Thtpa) from Mus musculus (Mouse).